Here is a 236-residue protein sequence, read N- to C-terminus: 3-deoxy-D-manno-octulosonic acid kinase (236 aa).

Residue Asp167 is part of the active site.

The protein belongs to the protein kinase superfamily. KdkA/RfaP family.

The protein resides in the cell inner membrane. The enzyme catalyses an alpha-Kdo-(2-&gt;6)-lipid IVA + ATP = a 4-O-phospho-alpha-Kdo-(2-&gt;6)-lipid IVA + ADP + H(+). Its pathway is bacterial outer membrane biogenesis; LPS core biosynthesis. Its function is as follows. Catalyzes the ATP-dependent phosphorylation of the 3-deoxy-D-manno-octulosonic acid (Kdo) residue in Kdo-lipid IV(A) at the 4-OH position. This chain is 3-deoxy-D-manno-octulosonic acid kinase, found in Vibrio vulnificus (strain CMCP6).